Reading from the N-terminus, the 99-residue chain is Acylphosphatase-2 (99 aa).

An N-acetylserine modification is found at Ser2. One can recognise an Acylphosphatase-like domain in the interval 9-99; that stretch reads SVDYEVFGRV…LEYSNFSIRY (91 aa). Residues Arg24 and Asn42 contribute to the active site. Ser93 is modified (phosphoserine).

Belongs to the acylphosphatase family.

It catalyses the reaction an acyl phosphate + H2O = a carboxylate + phosphate + H(+). Its physiological role is not yet clear. The polypeptide is Acylphosphatase-2 (ACYP2) (Homo sapiens (Human)).